The following is a 453-amino-acid chain: Allantoinase (453 aa).

Zn(2+) is bound by residues His59, His61, Lys146, His186, His242, and Asp315. Lys146 carries the N6-carboxylysine modification.

It belongs to the metallo-dependent hydrolases superfamily. Allantoinase family. In terms of assembly, homotetramer. Requires Zn(2+) as cofactor. In terms of processing, carboxylation allows a single lysine to coordinate two zinc ions.

The enzyme catalyses (S)-allantoin + H2O = allantoate + H(+). Its pathway is nitrogen metabolism; (S)-allantoin degradation; allantoate from (S)-allantoin: step 1/1. Its function is as follows. Catalyzes the conversion of allantoin (5-ureidohydantoin) to allantoic acid by hydrolytic cleavage of the five-member hydantoin ring. The protein is Allantoinase of Escherichia coli O139:H28 (strain E24377A / ETEC).